We begin with the raw amino-acid sequence, 213 residues long: Adenylate kinase (213 aa).

10–15 serves as a coordination point for ATP; it reads GAGKGT. Residues 30 to 59 are NMP; sequence STGDIFRANIKNNTELGQKAKTYMDKGELV. Residues threonine 31, arginine 36, 57-59, 85-88, and glutamine 92 each bind AMP; these read ELV and GFPR. Positions 126-163 are LID; that stretch reads GRRACVGCGATYHIQFNPTKVEGICDACGEKLILRDDD. Arginine 127 lines the ATP pocket. Zn(2+) is bound by residues cysteine 130 and cysteine 133. Residue 136–137 participates in ATP binding; that stretch reads TY. 2 residues coordinate Zn(2+): cysteine 150 and cysteine 153. Residues arginine 160 and arginine 171 each coordinate AMP. Residue glutamine 199 participates in ATP binding.

The protein belongs to the adenylate kinase family. In terms of assembly, monomer.

It localises to the cytoplasm. The catalysed reaction is AMP + ATP = 2 ADP. Its pathway is purine metabolism; AMP biosynthesis via salvage pathway; AMP from ADP: step 1/1. Its function is as follows. Catalyzes the reversible transfer of the terminal phosphate group between ATP and AMP. Plays an important role in cellular energy homeostasis and in adenine nucleotide metabolism. The sequence is that of Adenylate kinase from Lachnospira eligens (strain ATCC 27750 / DSM 3376 / VPI C15-48 / C15-B4) (Eubacterium eligens).